Consider the following 375-residue polypeptide: Chaperone protein DnaJ (375 aa).

One can recognise a J domain in the interval 5-70 (DYYEVLEISR…QKRQAYDRFG (66 aa)). The CR-type zinc-finger motif lies at 133-211 (GKEVTIQIPS…CHGHGRVRRN (79 aa)). Zn(2+) is bound by residues cysteine 146, cysteine 149, cysteine 163, cysteine 166, cysteine 185, cysteine 188, cysteine 199, and cysteine 202. 4 CXXCXGXG motif repeats span residues 146 to 153 (CEVCRGSG), 163 to 170 (CATCGGRG), 185 to 192 (CPQCNGSG), and 199 to 206 (CTNCHGHG).

Belongs to the DnaJ family. As to quaternary structure, homodimer. It depends on Zn(2+) as a cofactor.

It is found in the cytoplasm. Participates actively in the response to hyperosmotic and heat shock by preventing the aggregation of stress-denatured proteins and by disaggregating proteins, also in an autonomous, DnaK-independent fashion. Unfolded proteins bind initially to DnaJ; upon interaction with the DnaJ-bound protein, DnaK hydrolyzes its bound ATP, resulting in the formation of a stable complex. GrpE releases ADP from DnaK; ATP binding to DnaK triggers the release of the substrate protein, thus completing the reaction cycle. Several rounds of ATP-dependent interactions between DnaJ, DnaK and GrpE are required for fully efficient folding. Also involved, together with DnaK and GrpE, in the DNA replication of plasmids through activation of initiation proteins. The polypeptide is Chaperone protein DnaJ (Acidithiobacillus ferrooxidans (strain ATCC 23270 / DSM 14882 / CIP 104768 / NCIMB 8455) (Ferrobacillus ferrooxidans (strain ATCC 23270))).